The sequence spans 75 residues: Translational regulator CsrA (75 aa).

The protein belongs to the CsrA/RsmA family. Homodimer; the beta-strands of each monomer intercalate to form a hydrophobic core, while the alpha-helices form wings that extend away from the core. Interacts with FliW.

Its subcellular location is the cytoplasm. Functionally, a translational regulator that binds mRNA to regulate translation initiation and/or mRNA stability. Usually binds in the 5'-UTR at or near the Shine-Dalgarno sequence preventing ribosome-binding, thus repressing translation. Its function is probably anatagonized by FliW. Inhibits translation of flaA mRNA in vitro. Involved in post-transcriptional regulation of flagellin biosynthesis. The chain is Translational regulator CsrA from Campylobacter jejuni subsp. jejuni serotype O:6 (strain 81116 / NCTC 11828).